We begin with the raw amino-acid sequence, 209 residues long: Uracil phosphoribosyltransferase (209 aa).

5-phospho-alpha-D-ribose 1-diphosphate-binding positions include arginine 79, arginine 104, and 131-139 (DPMLATGNS). Uracil-binding positions include isoleucine 194 and 199–201 (GDA). Aspartate 200 contacts 5-phospho-alpha-D-ribose 1-diphosphate.

Belongs to the UPRTase family. Mg(2+) is required as a cofactor.

The catalysed reaction is UMP + diphosphate = 5-phospho-alpha-D-ribose 1-diphosphate + uracil. Its pathway is pyrimidine metabolism; UMP biosynthesis via salvage pathway; UMP from uracil: step 1/1. Its activity is regulated as follows. Allosterically activated by GTP. Functionally, catalyzes the conversion of uracil and 5-phospho-alpha-D-ribose 1-diphosphate (PRPP) to UMP and diphosphate. The protein is Uracil phosphoribosyltransferase of Acidovorax sp. (strain JS42).